Here is a 579-residue protein sequence, read N- to C-terminus: Glycine--tRNA ligase (579 aa).

Glycine is bound at residue Glu-175. Residues 207–209 (RNE) and 218–219 (RV) contribute to the ATP site. A glycine-binding site is contributed by Glu-226. Residue 327–328 (EC) participates in ATP binding. 442–444 (EPS) is a glycine binding site. ATP is bound at residue Arg-449.

Belongs to the class-II aminoacyl-tRNA synthetase family. Homodimer.

The catalysed reaction is tRNA(Gly) + glycine + ATP = glycyl-tRNA(Gly) + AMP + diphosphate. It carries out the reaction 2 ATP + H(+) = P(1),P(4)-bis(5'-adenosyl) tetraphosphate + diphosphate. Catalyzes the ATP-dependent ligation of glycine to the 3'-end of its cognate tRNA, via the formation of an aminoacyl-adenylate intermediate (Gly-AMP). Also produces diadenosine tetraphosphate (Ap4A), a universal pleiotropic signaling molecule needed for cell regulation pathways, by direct condensation of 2 ATPs. Thereby, may play a special role in Ap4A homeostasis. This Encephalitozoon cuniculi (strain GB-M1) (Microsporidian parasite) protein is Glycine--tRNA ligase.